The chain runs to 130 residues: Small ribosomal subunit protein uS9 (130 aa).

Belongs to the universal ribosomal protein uS9 family.

The polypeptide is Small ribosomal subunit protein uS9 (Hamiltonella defensa subsp. Acyrthosiphon pisum (strain 5AT)).